The chain runs to 553 residues: Dihydroxy-acid dehydratase (553 aa).

Asp-78 contributes to the Mg(2+) binding site. Residue Cys-119 coordinates [2Fe-2S] cluster. Mg(2+)-binding residues include Asp-120 and Lys-121. Lys-121 carries the post-translational modification N6-carboxylysine. Cys-193 provides a ligand contact to [2Fe-2S] cluster. Glu-441 is a binding site for Mg(2+). The active-site Proton acceptor is the Ser-467.

Belongs to the IlvD/Edd family. In terms of assembly, homodimer. [2Fe-2S] cluster is required as a cofactor. Mg(2+) serves as cofactor.

It catalyses the reaction (2R)-2,3-dihydroxy-3-methylbutanoate = 3-methyl-2-oxobutanoate + H2O. The enzyme catalyses (2R,3R)-2,3-dihydroxy-3-methylpentanoate = (S)-3-methyl-2-oxopentanoate + H2O. The protein operates within amino-acid biosynthesis; L-isoleucine biosynthesis; L-isoleucine from 2-oxobutanoate: step 3/4. Its pathway is amino-acid biosynthesis; L-valine biosynthesis; L-valine from pyruvate: step 3/4. Functions in the biosynthesis of branched-chain amino acids. Catalyzes the dehydration of (2R,3R)-2,3-dihydroxy-3-methylpentanoate (2,3-dihydroxy-3-methylvalerate) into 2-oxo-3-methylpentanoate (2-oxo-3-methylvalerate) and of (2R)-2,3-dihydroxy-3-methylbutanoate (2,3-dihydroxyisovalerate) into 2-oxo-3-methylbutanoate (2-oxoisovalerate), the penultimate precursor to L-isoleucine and L-valine, respectively. This is Dihydroxy-acid dehydratase from Trichlorobacter lovleyi (strain ATCC BAA-1151 / DSM 17278 / SZ) (Geobacter lovleyi).